Here is a 779-residue protein sequence, read N- to C-terminus: MEKMTRVSTINGRTMFCHLDAPANAISVCRDATQVVVAGRNIFKIYGLEEDGFVERLNLRVGRKPSLNFSCADVMWHQMEENLLATAATNGAVVTWNLSRPCRNKQEQLFTEHKRTVNKVCFHPTEVNMLLSGSQDGFMKCFDLRKKESVSTFSGQSESVRDVQFSMKDYFTFAASFENGNVQLWDIRRPDRYERMFTAHTGPVFCCDWHPEDRGWLATGGRDKMVKVWDMSTNRVKEIYCVQTFASVARVKWRPERRYHLATCSMMVDHNIYVWDVRRPFIPFATFEEHKDVTTGIVWRHQHDPYFLLSGSKDSTLYQHMFKDASRPVDRANPEGLCFGLFGDLAFAAKESLMSAPASAGDVGRKTYPGGDRRYPIFFFKKPDVTEQFAQVSSALSVFESEADSSAGMDWFINTAQSYLLSGKPFAELCEHNAHVAKSLNRPQESTTWTMLRIMFSEPANPSLSTNHNLNKSGNLPLVNSFSMKEMSGALNERNKENRQDNIHSLETNLNNNDENEETEGSEGQAEYLFVDDELDDDELYSMEHDNQPAEESEYLLPQEAFPLRHEIMDHPSAPEPLQEKQESPHVSGSEAESMCLTPMESFSLISVSQQLFSPHLPPKFFCPIVKEMLCYYAEQGDVQMAVSVLIVLGDRIRKEIDELMQEHWYMSYIDLLQRFELWNVSNEVIKLSTCGAIMCLNQASTTLHINCSNCKRPMSNKGWICDRCHQCASVCAVCHHVVKGLFVWCQGCSHGGHLEHVMEWLKQSKHCPAGCGHLCEYT.

WD repeat units follow at residues 66 to 106 (SLNF…RNKQ), 112 to 152 (EHKR…SVST), 155 to 195 (GQSE…RYER), 199 to 239 (AHTG…VKEI), 243 to 285 (QTFA…IPFA), and 289 to 332 (EHKD…VDRA). Disordered stretches follow at residues 506–526 (LETNLNNNDENEETEGSEGQA) and 570–590 (DHPSAPEPLQEKQESPHVSGS). The segment at 707–729 (NCSNCKRPMSNKGWICDRCHQCA) adopts a C4-type zinc-finger fold. Zn(2+)-binding residues include cysteine 708, cysteine 711, cysteine 722, cysteine 725, cysteine 732, cysteine 735, cysteine 746, cysteine 749, histidine 751, histidine 754, histidine 757, cysteine 768, cysteine 772, histidine 774, and cysteine 776. An RING-type; atypical zinc finger spans residues 730 to 779 (SVCAVCHHVVKGLFVWCQGCSHGGHLEHVMEWLKQSKHCPAGCGHLCEYT).

The protein belongs to the WD repeat WDR24 family. In terms of assembly, component of the GATOR2 subcomplex, composed of MIOS, SEC13, SEH1L, WDR24 and WDR59. The GATOR2 complex interacts with CASTOR1 and CASTOR2; the interaction is negatively regulated by arginine. The GATOR2 complex interacts with SESN1, SESN2 and SESN3; the interaction is negatively regulated by amino acids.

The protein resides in the lysosome membrane. The enzyme catalyses S-ubiquitinyl-[E2 ubiquitin-conjugating enzyme]-L-cysteine + [acceptor protein]-L-lysine = [E2 ubiquitin-conjugating enzyme]-L-cysteine + N(6)-ubiquitinyl-[acceptor protein]-L-lysine.. It functions in the pathway protein modification; protein ubiquitination. Its activity is regulated as follows. The GATOR2 complex is negatively regulated by the upstream amino acid sensors CASTOR1 and SESN2, which sequester the GATOR2 complex in absence of amino acids. In the presence of abundant amino acids, GATOR2 is released from CASTOR1 and SESN2 and activated. In terms of biological role, catalytic component of the GATOR2 complex, a multiprotein complex that acts as an activator of the amino acid-sensing branch of the mTORC1 signaling pathway. The GATOR2 complex indirectly activates mTORC1 through the inhibition of the GATOR1 subcomplex. GATOR2 probably acts as an E3 ubiquitin-protein ligase toward GATOR1. In the presence of abundant amino acids, the GATOR2 complex mediates ubiquitination of the NPRL2 core component of the GATOR1 complex, leading to GATOR1 inactivation. In the absence of amino acids, GATOR2 is inhibited, activating the GATOR1 complex. In addition to its role in regulation of the mTORC1 complex, promotes the acidification of lysosomes and facilitates autophagic flux. Within the GATOR2 complex, WDR24 constitutes the catalytic subunit that mediates 'Lys-6'-linked ubiquitination of NPRL2. This Danio rerio (Zebrafish) protein is GATOR2 complex protein WDR24.